A 145-amino-acid polypeptide reads, in one-letter code: RNAP inhibitory protein (145 aa).

Positions 110–123 (HIKKLNLNSLAMLS) are C-terminal tail, binds in the RNAP DNA-binding channel.

The protein belongs to the viral ORF131/RIP family. As to quaternary structure, interacts with host RNA polymerase (RNAP) subunits Rpo1N and Rpo2.

Its subcellular location is the virion. Functionally, plays a role in the inhibition of global transcription by interacting with the RNA polymerase (RNAP) clamp, locking it in a fixed position and inhibiting the formation and/or stability of the pre-initiation complex (PIC). Also overlaps with the transcription factor B binding site; overall RIP probably interferes with DNA loading onto RNAP but does not displace DNA once it is loaded. May play a role in virus particle assembly, possibly by dissociating active RNAP from the virus genome. This Acidianus two-tailed virus (ATV) protein is RNAP inhibitory protein.